A 273-amino-acid polypeptide reads, in one-letter code: 3-methyl-2-oxobutanoate hydroxymethyltransferase (273 aa).

D53 and D92 together coordinate Mg(2+). 3-methyl-2-oxobutanoate-binding positions include 53-54, D92, and K122; that span reads DS. Residue E124 participates in Mg(2+) binding. E191 (proton acceptor) is an active-site residue.

The protein belongs to the PanB family. As to quaternary structure, homodecamer; pentamer of dimers. Requires Mg(2+) as cofactor.

The protein localises to the cytoplasm. The catalysed reaction is 3-methyl-2-oxobutanoate + (6R)-5,10-methylene-5,6,7,8-tetrahydrofolate + H2O = 2-dehydropantoate + (6S)-5,6,7,8-tetrahydrofolate. It participates in cofactor biosynthesis; (R)-pantothenate biosynthesis; (R)-pantoate from 3-methyl-2-oxobutanoate: step 1/2. Its function is as follows. Catalyzes the reversible reaction in which hydroxymethyl group from 5,10-methylenetetrahydrofolate is transferred onto alpha-ketoisovalerate to form ketopantoate. This is 3-methyl-2-oxobutanoate hydroxymethyltransferase from Bacteroides fragilis (strain ATCC 25285 / DSM 2151 / CCUG 4856 / JCM 11019 / LMG 10263 / NCTC 9343 / Onslow / VPI 2553 / EN-2).